The following is a 296-amino-acid chain: 4-hydroxy-tetrahydrodipicolinate synthase (296 aa).

Pyruvate is bound at residue threonine 50. Tyrosine 138 (proton donor/acceptor) is an active-site residue. Lysine 166 acts as the Schiff-base intermediate with substrate in catalysis. Isoleucine 208 serves as a coordination point for pyruvate.

The protein belongs to the DapA family. As to quaternary structure, homotetramer; dimer of dimers.

Its subcellular location is the cytoplasm. The catalysed reaction is L-aspartate 4-semialdehyde + pyruvate = (2S,4S)-4-hydroxy-2,3,4,5-tetrahydrodipicolinate + H2O + H(+). The protein operates within amino-acid biosynthesis; L-lysine biosynthesis via DAP pathway; (S)-tetrahydrodipicolinate from L-aspartate: step 3/4. Functionally, catalyzes the condensation of (S)-aspartate-beta-semialdehyde [(S)-ASA] and pyruvate to 4-hydroxy-tetrahydrodipicolinate (HTPA). In Thiobacillus denitrificans (strain ATCC 25259 / T1), this protein is 4-hydroxy-tetrahydrodipicolinate synthase.